Here is a 901-residue protein sequence, read N- to C-terminus: Protein translocase subunit SecA (901 aa).

Residues Gln87, 105–109 (GEGKT), and Asp512 each bind ATP. The disordered stretch occupies residues 859-901 (HQDDDSAAAAALAAQTGERKVGRNDPCPCGSGKKYKQCHGRLQ). Zn(2+) contacts are provided by Cys885, Cys887, Cys896, and His897. A compositionally biased stretch (basic residues) spans 891–901 (KKYKQCHGRLQ).

Belongs to the SecA family. As to quaternary structure, monomer and homodimer. Part of the essential Sec protein translocation apparatus which comprises SecA, SecYEG and auxiliary proteins SecDF-YajC and YidC. The cofactor is Zn(2+).

The protein resides in the cell inner membrane. It is found in the cytoplasm. The enzyme catalyses ATP + H2O + cellular proteinSide 1 = ADP + phosphate + cellular proteinSide 2.. Functionally, part of the Sec protein translocase complex. Interacts with the SecYEG preprotein conducting channel. Has a central role in coupling the hydrolysis of ATP to the transfer of proteins into and across the cell membrane, serving both as a receptor for the preprotein-SecB complex and as an ATP-driven molecular motor driving the stepwise translocation of polypeptide chains across the membrane. This Escherichia coli O139:H28 (strain E24377A / ETEC) protein is Protein translocase subunit SecA.